The chain runs to 196 residues: Endoribonuclease YbeY (196 aa).

Zn(2+) is bound by residues His120, His124, and His130.

It belongs to the endoribonuclease YbeY family. Requires Zn(2+) as cofactor.

Its subcellular location is the cytoplasm. In terms of biological role, single strand-specific metallo-endoribonuclease involved in late-stage 70S ribosome quality control and in maturation of the 3' terminus of the 16S rRNA. This chain is Endoribonuclease YbeY, found in Corynebacterium glutamicum (strain R).